Consider the following 442-residue polypeptide: Syndecan-3 (442 aa).

Disordered regions lie at residues Met-1–Ala-25 and Arg-55–Phe-85. The N-terminal stretch at Met-1–Gly-44 is a signal peptide. Over Ala-45–Val-387 the chain is Extracellular. Over residues Gly-61 to Asp-75 the composition is skewed to acidic residues. Ser-78, Ser-80, Ser-82, and Ser-89 each carry an O-linked (Xyl...) (glycosaminoglycan) serine glycan. O-linked (GalNAc) threonine; by GALNT13 glycosylation occurs at Thr-107. Disordered regions lie at residues Glu-151–Pro-175, Ala-180–Ala-199, Ala-225–Ala-244, Thr-252–Pro-327, and Ala-339–Ala-372. Positions Ala-157–Pro-175 are enriched in low complexity. Ser-161 carries O-linked (GalNAc) serine; by GALNT13 glycosylation. Thr-162, Thr-163, Thr-170, and Thr-172 each carry an O-linked (GalNAc) threonine; by GALNT13 glycan. Low complexity predominate over residues Thr-276–Thr-287. Residues Val-289–Gln-303 show a composition bias toward polar residues. 2 O-linked (Xyl...) (glycosaminoglycan) serine glycosylation sites follow: Ser-315 and Ser-367. A helical transmembrane segment spans residues Ala-388 to Ile-408. Phosphotyrosine is present on residues Tyr-409, Tyr-419, Tyr-431, and Tyr-441. The Cytoplasmic segment spans residues Tyr-409–Ala-442. Positions Tyr-419–Ala-442 are disordered. Basic and acidic residues predominate over residues Lys-433–Ala-442.

Belongs to the syndecan proteoglycan family. Interacts with TIAM1. Interacts (via heparan sulfate chains) with PTN; this interaction mediates the neurite outgrowth-promoting signal from PTN to the cytoskeleton of growing neurites; this interaction mediates osteoblast recruitment. Interacts with MDK; this interaction induces SDC3 clustering; this interaction induces neuronal cell adhesion and neurite outgrowth. Post-translationally, O-glycosylated within the Thr/Ser-rich region which could interact with lectin domains on other molecules. In terms of tissue distribution, high levels in neonatal brain, heart, and Schwann cells, barely detectable in neonatal or adult liver, or adult brain.

Its subcellular location is the cell membrane. Functionally, cell surface proteoglycan that may bear heparan sulfate. May have a role in the organization of cell shape by affecting the actin cytoskeleton, possibly by transferring signals from the cell surface in a sugar-dependent mechanism. The chain is Syndecan-3 (Sdc3) from Rattus norvegicus (Rat).